The chain runs to 521 residues: MLCALLLLPSLLGATRASPTSGPQECAKGSTVWCQDLQTAARCGAVGYCQGAVWNKPTAKSLPCDVCQDIAAAAGNGLNPDATESDILALVMKTCEWLPSQESSAGCKWMVDAHSSAILSMLRGAPDSAPAQVCTALSLCEPLQRHLATLRPLSKEDTFEAVAPFMANGPLTFHPRQAPEGALCQDCVRQVSRLQEAVRSNLTLADLNIQEQCESLGPGLAVLCKNYLFQFFVPADQALRLLPPQELCRKGGFCEELGAPARLTQVVAMDGVPSLELGLPRKQSEMQMKAGVTCEVCMNVVQKLDHWLMSNSSELMITHALERVCSVMPASITKECIILVDTYSPSLVQLVAKITPEKVCKFIRLCGNRRRARAVHDAYAIVPSPEWDAENQGSFCNGCKRLLTVSSHNLESKSTKRDILVAFKGGCSILPLPYMIQCKHFVTQYEPVLIESLKDMMDPVAVCKKVGACHGPRTPLLGTDQCALGPSFWCRSQEAAKLCNAVQHCQKHVWKEMHLHAGEHA.

Residues 1 to 17 (MLCALLLLPSLLGATRA) form the signal peptide. Positions 18–59 (SPTSGPQECAKGSTVWCQDLQTAARCGAVGYCQGAVWNKPTA) are excised as a propeptide. The Saposin A-type 1 domain occupies 19-59 (PTSGPQECAKGSTVWCQDLQTAARCGAVGYCQGAVWNKPTA). Saposin B-type domains follow at residues 60–144 (KSLP…EPLQ) and 180–258 (EGAL…EELG). 3 disulfides stabilise this stretch: C64–C140, C67–C134, and C95–C107. The propeptide occupies 146-180 (HLATLRPLSKEDTFEAVAPFMANGPLTFHPRQAPE). 3 disulfide bridges follow: C184–C254, C187–C248, and C213–C224. N201 carries N-linked (GlcNAc...) asparagine glycosylation. The propeptide occupies 259–288 (APARLTQVVAMDGVPSLELGLPRKQSEMQM). 2 consecutive Saposin B-type domains span residues 290–370 (AGVT…GNRR) and 392–473 (QGSF…HGPR). 3 cysteine pairs are disulfide-bonded: C294/C366, C297/C360, and C325/C336. N-linked (GlcNAc...) asparagine glycosylation is present at N311. Residues 370–391 (RRARAVHDAYAIVPSPEWDAEN) constitute a propeptide that is removed on maturation. 3 disulfide bridges follow: C396–C469, C399–C463, and C427–C438. Residues 474-521 (TPLLGTDQCALGPSFWCRSQEAAKLCNAVQHCQKHVWKEMHLHAGEHA) constitute a propeptide that is removed on maturation. The 41-residue stretch at 475–515 (PLLGTDQCALGPSFWCRSQEAAKLCNAVQHCQKHVWKEMHL) folds into the Saposin A-type 2 domain.

It is found in the secreted. Its function is as follows. May activate the lysosomal degradation of sphingolipids. The polypeptide is Proactivator polypeptide-like 1 (PSAPL1) (Homo sapiens (Human)).